The following is a 167-amino-acid chain: Caltractin (167 aa).

The segment covering 1–18 has biased composition (basic residues); the sequence is MSSARTVRKDKPRGRHHG. Residues 1 to 23 form a disordered region; that stretch reads MSSARTVRKDKPRGRHHGLTQQK. 4 EF-hand domains span residues 22-57, 58-93, 95-130, and 131-166; these read QKRQEIKEAFELFDTDGSGTIDAKELNVAMRALGFE, MTEEQINQMIADVDKDGSGAIDFDEFCHMMTAKIGE, DTKEELMKAFRIIDQDNNGKISPEDIQRIAKELGEN, and FTVKDIQDMIEEADRDRDGEVNVEEFLRMMKRTSYA. Residues Asp35, Asp37, Ser39, Thr41, Glu46, Asp71, Asp73, Ser75, Glu82, Asp108, Asp110, Asn112, Lys114, Asp119, Asp144, Asp146, Asp148, Glu150, and Glu155 each contribute to the Ca(2+) site.

It belongs to the centrin family.

The protein resides in the cytoplasm. The protein localises to the cytoskeleton. Its subcellular location is the microtubule organizing center. Its function is as follows. Plays a fundamental role in microtubule-organizing center structure and function. The protein is Caltractin of Atriplex nummularia (Old man saltbush).